The sequence spans 393 residues: MDTFLFTSESVNEGHPDKLCDQISDAILDACLEQDPESKVACETCTKTNMVMIFGEITTKANIDYEKIVRDTCRGIGFVSADVGLDADNCKVLVNIEQQSPDIAQGVHGHLTKKPEEIGAGDQGHMFGYATDETPELMPLTHVLATKLGARLTEVRKDGTCPWLRPDGKTQVTVEYKNEGGAMVPLRVHTVLISTQHDETVTNDEIAADLKEHVIKPVVPSQYLDENTIFHLNPSGRFVIGGPHGDAGLTGRKIIIDTYGGWGAHGGGAFSGKDPTKVDRSGAYIVRQAAKSVVAAGLARRCLVQVSYAIGVPEPLSVFVDTYGTGTGKIQDAEILKLIKENFDFRPGMISINLDLKRGGNMRFQKTAAYGHFGREDPDFTWETVKVLKWEKA.

Glu-9 is a binding site for Mg(2+). His-15 lines the ATP pocket. Glu-43 is a binding site for K(+). L-methionine is bound by residues Glu-56 and Gln-99. ATP-binding positions include 167 to 169 (DGK), 235 to 238 (SGRF), Asp-246, 252 to 253 (RK), Ala-269, Lys-273, and Lys-277. L-methionine is bound at residue Asp-246. L-methionine is bound at residue Lys-277.

Belongs to the AdoMet synthase family. In terms of assembly, homotetramer. It depends on Mn(2+) as a cofactor. The cofactor is Mg(2+). Co(2+) is required as a cofactor. K(+) serves as cofactor.

The protein localises to the cytoplasm. The catalysed reaction is L-methionine + ATP + H2O = S-adenosyl-L-methionine + phosphate + diphosphate. The protein operates within amino-acid biosynthesis; S-adenosyl-L-methionine biosynthesis; S-adenosyl-L-methionine from L-methionine: step 1/1. Its function is as follows. Catalyzes the formation of S-adenosylmethionine from methionine and ATP. The reaction comprises two steps that are both catalyzed by the same enzyme: formation of S-adenosylmethionine (AdoMet) and triphosphate, and subsequent hydrolysis of the triphosphate. The chain is S-adenosylmethionine synthase 1 (METK1) from Picea sitchensis (Sitka spruce).